A 212-amino-acid chain; its full sequence is Peptide methionine sulfoxide reductase MsrA (212 aa).

Cys52 is an active-site residue.

The protein belongs to the MsrA Met sulfoxide reductase family.

The enzyme catalyses L-methionyl-[protein] + [thioredoxin]-disulfide + H2O = L-methionyl-(S)-S-oxide-[protein] + [thioredoxin]-dithiol. It catalyses the reaction [thioredoxin]-disulfide + L-methionine + H2O = L-methionine (S)-S-oxide + [thioredoxin]-dithiol. In terms of biological role, has an important function as a repair enzyme for proteins that have been inactivated by oxidation. Catalyzes the reversible oxidation-reduction of methionine sulfoxide in proteins to methionine. In Escherichia coli O17:K52:H18 (strain UMN026 / ExPEC), this protein is Peptide methionine sulfoxide reductase MsrA.